A 133-amino-acid chain; its full sequence is Ribonuclease P protein component (133 aa).

Belongs to the RnpA family. In terms of assembly, consists of a catalytic RNA component (M1 or rnpB) and a protein subunit.

The enzyme catalyses Endonucleolytic cleavage of RNA, removing 5'-extranucleotides from tRNA precursor.. RNaseP catalyzes the removal of the 5'-leader sequence from pre-tRNA to produce the mature 5'-terminus. It can also cleave other RNA substrates such as 4.5S RNA. The protein component plays an auxiliary but essential role in vivo by binding to the 5'-leader sequence and broadening the substrate specificity of the ribozyme. This chain is Ribonuclease P protein component, found in Corynebacterium glutamicum (strain ATCC 13032 / DSM 20300 / JCM 1318 / BCRC 11384 / CCUG 27702 / LMG 3730 / NBRC 12168 / NCIMB 10025 / NRRL B-2784 / 534).